Here is a 362-residue protein sequence, read N- to C-terminus: UDP-galactose transporter homolog 1 (362 aa).

The next 5 helical transmembrane spans lie at 7-27 (IFPV…WALV), 45-65 (CPNV…YFYM), 111-131 (LTYM…HLII), 141-161 (SVVA…GSKG), and 175-195 (FFQK…DGLT). N-linked (GlcNAc...) asparagine glycosylation is present at Asn-196. The next 4 membrane-spanning stretches (helical) occupy residues 234-254 (HMMF…LLVI), 271-291 (IIVS…CFIF), 296-316 (LYGS…SMLL), and 317-337 (SIIV…VIVF).

This sequence belongs to the nucleotide-sugar transporter family. SLC35B subfamily.

It is found in the endoplasmic reticulum membrane. Its function is as follows. May be involved in specific transport of UDP-Gal from the cytosol to the Golgi lumen. Involved in the maintenance of optimal conditions for the folding of secretory pathway proteins in the endoplasmic reticulum. This Candida glabrata (strain ATCC 2001 / BCRC 20586 / JCM 3761 / NBRC 0622 / NRRL Y-65 / CBS 138) (Yeast) protein is UDP-galactose transporter homolog 1 (HUT1).